A 321-amino-acid polypeptide reads, in one-letter code: uncharacterized protein (321 aa).

Residues 280 to 306 (NSDHINNENNTNSNNDDNSNNSNNNNE) are disordered. Over residues 286-306 (NENNTNSNNDDNSNNSNNNNE) the composition is skewed to low complexity.

This is an uncharacterized protein from Dictyostelium discoideum (Social amoeba).